The sequence spans 526 residues: MKLFNPRLIVFIFALLLGVGFSVPSLLETKGPKITLGLDLRGGLNMLLGVQTDEALKNKYLSLASALEYNAKKQNILLKDIKSSLEGISFELLDEDEAKKLDALLLELQGHSQFEIKKEAEFYSVKLTPLEQEELRKNTILQVIGIIRNRLDQFGLAEPVVIQQGREEISVQLPGIKTLEEERRAKDLISKSAHLQMMAVDEEHNKDAMNMTDLEAQKLGSVLLSDAEMGGKILLKAIPILDGEMLTDAKVVYDQNNQPVVSFTLDAQGAKIFGDFSGANVGKRMAIVLDNKVYSAPVIRERIGGGSGQISGNFSVAQASDLAIALRSGAMNAPIQVLEKRIVGPSLGKDSIKTSIIALVGGFILVMGFMALYYSMAGVIACMALVVNLFLIVAVMAIFGATLTLPGMAGIVLTVGIAVDANIIINERIREVLREGEGVVKAIHLGYINASRAIFDSNITSLIASVLLYAYGTGAIKGFALTTGIGILASIITAIIGTQGIYQALLPKLAQTKSLYFWFGVKNKRA.

6 helical membrane passes run 8 to 28, 356 to 376, 379 to 399, 405 to 425, 453 to 473, and 478 to 498; these read LIVF…SLLE, IIAL…YYSM, VIAC…MAIF, LPGM…NIII, AIFD…AYGT, and GFAL…IIGT.

It belongs to the SecD/SecF family. SecD subfamily. In terms of assembly, forms a complex with SecF. Part of the essential Sec protein translocation apparatus which comprises SecA, SecYEG and auxiliary proteins SecDF-YajC and YidC.

Its subcellular location is the cell inner membrane. Its function is as follows. Part of the Sec protein translocase complex. Interacts with the SecYEG preprotein conducting channel. SecDF uses the proton motive force (PMF) to complete protein translocation after the ATP-dependent function of SecA. The chain is Protein translocase subunit SecD from Helicobacter pylori (strain J99 / ATCC 700824) (Campylobacter pylori J99).